The primary structure comprises 102 residues: MTSLPVLLFLIILLLPSMITEGRVLTQTGKEATIFADQKTNHEADLKNPDPQEVQRALARILCALGELDKLVKDQANAGQQEFKLPKDFTGRSKCRSLGRIK.

The signal sequence occupies residues 1 to 22 (MTSLPVLLFLIILLLPSMITEG). Cys63 and Cys95 are oxidised to a cystine.

The protein belongs to the exocrine gland-secreted peptide family. Monomer. Expressed in the extraorbital lacrimal gland from where it is secreted into tears.

It is found in the secreted. Male-specific phermone which is recognized by the Vmn2r116/V2rp5 receptor in the vomeronasal organ (VNO) and enhances female sexual receptive behavior (lordosis) upon male mounting, resulting in successful copulation. The polypeptide is Exocrine gland-secreted peptide 1 (Mus musculus (Mouse)).